Consider the following 380-residue polypeptide: Succinate--CoA ligase [ADP-forming] subunit beta (380 aa).

The region spanning 9–237 (RDLLARFGIP…PSAEPEAERR (229 aa)) is the ATP-grasp domain. ATP-binding positions include lysine 45, 52–54 (GRG), valine 94, and glutamate 99. Residues asparagine 192 and aspartate 206 each contribute to the Mg(2+) site. Substrate-binding positions include asparagine 257 and 314 to 316 (GIT).

This sequence belongs to the succinate/malate CoA ligase beta subunit family. As to quaternary structure, heterotetramer of two alpha and two beta subunits. The cofactor is Mg(2+).

The enzyme catalyses succinate + ATP + CoA = succinyl-CoA + ADP + phosphate. It carries out the reaction GTP + succinate + CoA = succinyl-CoA + GDP + phosphate. It functions in the pathway carbohydrate metabolism; tricarboxylic acid cycle; succinate from succinyl-CoA (ligase route): step 1/1. Succinyl-CoA synthetase functions in the citric acid cycle (TCA), coupling the hydrolysis of succinyl-CoA to the synthesis of either ATP or GTP and thus represents the only step of substrate-level phosphorylation in the TCA. The beta subunit provides nucleotide specificity of the enzyme and binds the substrate succinate, while the binding sites for coenzyme A and phosphate are found in the alpha subunit. The protein is Succinate--CoA ligase [ADP-forming] subunit beta of Chloroflexus aurantiacus (strain ATCC 29366 / DSM 635 / J-10-fl).